The chain runs to 438 residues: Coenzyme A disulfide reductase (438 aa).

FAD is bound at residue 8-33 (GAVAGGATCASQIRRLDKESDIIIFE). Residues Thr-15, Gln-19, Arg-22, Ser-39, and Asn-42 each coordinate substrate. Catalysis depends on Cys-43, which acts as the Nucleophile. Cys-43 acts as the Redox-active in catalysis. Lys-71 contributes to the substrate binding site. 151-166 (VLVVGAGYVSLEVLEN) contributes to the NADP(+) binding site. Residue 267–277 (TNVPNIYVIGD) participates in FAD binding. Residue His-299 participates in substrate binding. Tyr-419 provides a ligand contact to FAD. Lys-427 contributes to the substrate binding site.

Belongs to the class-III pyridine nucleotide-disulfide oxidoreductase family. In terms of assembly, homodimer. FAD serves as cofactor.

The catalysed reaction is NADP(+) + 2 CoA = CoA-disulfide + NADPH + H(+). Its function is as follows. Catalyzes specifically the NADPH-dependent reduction of coenzyme A disulfide. This Staphylococcus aureus (strain MRSA252) protein is Coenzyme A disulfide reductase.